Consider the following 93-residue polypeptide: Small ribosomal subunit protein bS18 (93 aa).

This sequence belongs to the bacterial ribosomal protein bS18 family. As to quaternary structure, part of the 30S ribosomal subunit. Forms a tight heterodimer with protein bS6.

In terms of biological role, binds as a heterodimer with protein bS6 to the central domain of the 16S rRNA, where it helps stabilize the platform of the 30S subunit. The protein is Small ribosomal subunit protein bS18 of Variovorax paradoxus (strain S110).